The primary structure comprises 264 residues: Shikimate dehydrogenase (NADP(+)) (264 aa).

Residues 14–16 and Thr-59 each bind shikimate; that span reads SLS. Residue Lys-63 is the Proton acceptor of the active site. Residue Glu-75 participates in NADP(+) binding. Shikimate-binding residues include Asn-84 and Asp-99. Residues 122–126, 144–149, and Ile-205 each bind NADP(+); these read GAGGA and NRTPSK. Residue Tyr-207 coordinates shikimate. NADP(+) is bound at residue Gly-228.

Belongs to the shikimate dehydrogenase family. In terms of assembly, homodimer.

The catalysed reaction is shikimate + NADP(+) = 3-dehydroshikimate + NADPH + H(+). The protein operates within metabolic intermediate biosynthesis; chorismate biosynthesis; chorismate from D-erythrose 4-phosphate and phosphoenolpyruvate: step 4/7. Its function is as follows. Involved in the biosynthesis of the chorismate, which leads to the biosynthesis of aromatic amino acids. Catalyzes the reversible NADPH linked reduction of 3-dehydroshikimate (DHSA) to yield shikimate (SA). This Pyrococcus abyssi (strain GE5 / Orsay) protein is Shikimate dehydrogenase (NADP(+)).